A 207-amino-acid chain; its full sequence is Large ribosomal subunit protein bL17m (207 aa).

The segment covering Glu-173 to Pro-200 has biased composition (basic and acidic residues). Residues Glu-173–Ile-207 form a disordered region.

It belongs to the bacterial ribosomal protein bL17 family. As to quaternary structure, component of the mitochondrial large ribosomal subunit (mt-LSU). Mature yeast 74S mitochondrial ribosomes consist of a small (37S) and a large (54S) subunit. The 37S small subunit contains a 15S ribosomal RNA (15S mt-rRNA) and at least 32 different proteins. The 54S large subunit contains a 21S rRNA (21S mt-rRNA) and at least 45 different proteins.

The protein resides in the mitochondrion. Component of the mitochondrial ribosome (mitoribosome), a dedicated translation machinery responsible for the synthesis of mitochondrial genome-encoded proteins, including at least some of the essential transmembrane subunits of the mitochondrial respiratory chain. The mitoribosomes are attached to the mitochondrial inner membrane and translation products are cotranslationally integrated into the membrane. The sequence is that of Large ribosomal subunit protein bL17m (mrpl8) from Schizosaccharomyces pombe (strain 972 / ATCC 24843) (Fission yeast).